The following is a 156-amino-acid chain: Enhancer of split M1 protein (156 aa).

The first 19 residues, 1–19 (MMSQTLTLCCLALVACVYG), serve as a signal peptide directing secretion. Kazal-like domains follow at residues 23–81 (STND…AWCS) and 96–156 (KLEV…EEKC). 5 cysteine pairs are disulfide-bonded: Cys29-Cys62, Cys33-Cys55, Cys102-Cys135, Cys106-Cys128, and Cys114-Cys156.

The protein is Enhancer of split M1 protein (Kaz-m1) of Drosophila melanogaster (Fruit fly).